The chain runs to 346 residues: Biotin synthase (346 aa).

Positions 38 to 256 (RQVQVSTLLS…IAIARIMMPT (219 aa)) constitute a Radical SAM core domain. 3 residues coordinate [4Fe-4S] cluster: cysteine 53, cysteine 57, and cysteine 60. Residues cysteine 97, cysteine 128, cysteine 188, and arginine 260 each contribute to the [2Fe-2S] cluster site.

It belongs to the radical SAM superfamily. Biotin synthase family. Homodimer. It depends on [4Fe-4S] cluster as a cofactor. [2Fe-2S] cluster is required as a cofactor.

It catalyses the reaction (4R,5S)-dethiobiotin + (sulfur carrier)-SH + 2 reduced [2Fe-2S]-[ferredoxin] + 2 S-adenosyl-L-methionine = (sulfur carrier)-H + biotin + 2 5'-deoxyadenosine + 2 L-methionine + 2 oxidized [2Fe-2S]-[ferredoxin]. It participates in cofactor biosynthesis; biotin biosynthesis; biotin from 7,8-diaminononanoate: step 2/2. Its function is as follows. Catalyzes the conversion of dethiobiotin (DTB) to biotin by the insertion of a sulfur atom into dethiobiotin via a radical-based mechanism. The protein is Biotin synthase of Klebsiella pneumoniae (strain 342).